The primary structure comprises 122 residues: Large ribosomal subunit protein uL14 (122 aa).

It belongs to the universal ribosomal protein uL14 family. As to quaternary structure, part of the 50S ribosomal subunit. Forms a cluster with proteins L3 and L19. In the 70S ribosome, L14 and L19 interact and together make contacts with the 16S rRNA in bridges B5 and B8.

Its function is as follows. Binds to 23S rRNA. Forms part of two intersubunit bridges in the 70S ribosome. In Limosilactobacillus reuteri (strain DSM 20016) (Lactobacillus reuteri), this protein is Large ribosomal subunit protein uL14.